Consider the following 242-residue polypeptide: uncharacterized protein (242 aa).

Residues 1 to 12 are compositionally biased toward basic and acidic residues; sequence MKLRRERFERRN. The interval 1–21 is disordered; that stretch reads MKLRRERFERRNGSGKNSQSS. At 1-23 the chain is on the cytoplasmic side; it reads MKLRRERFERRNGSGKNSQSSSS. The helical transmembrane segment at 24-44 threads the bilayer; the sequence is WMVTFTDLITLILVFFILLFS. The Extracellular segment spans residues 45-242; sequence MSQIDLQKFK…VIKKSKTTSS (198 aa). The tract at residues 64-91 is disordered; that stretch reads GNGLQPDQTSIEKKNTSPSDTKKQEDQQ. Residues 73–89 show a composition bias toward basic and acidic residues; that stretch reads SIEKKNTSPSDTKKQED. The region spanning 117–238 is the OmpA-like domain; the sequence is ERGVVLVLQE…RVEIVIKKSK (122 aa).

The protein belongs to the MotB family.

It is found in the cell membrane. May be involved in some transport function. This is an uncharacterized protein from Bacillus subtilis (strain 168).